Reading from the N-terminus, the 208-residue chain is Small ribosomal subunit protein uS4 (208 aa).

The S4 RNA-binding domain maps to 98–161 (QRLDNLVYRM…KNNPQILRAV (64 aa)).

The protein belongs to the universal ribosomal protein uS4 family. As to quaternary structure, part of the 30S ribosomal subunit. Contacts protein S5. The interaction surface between S4 and S5 is involved in control of translational fidelity.

In terms of biological role, one of the primary rRNA binding proteins, it binds directly to 16S rRNA where it nucleates assembly of the body of the 30S subunit. With S5 and S12 plays an important role in translational accuracy. This chain is Small ribosomal subunit protein uS4, found in Campylobacter hominis (strain ATCC BAA-381 / DSM 21671 / CCUG 45161 / LMG 19568 / NCTC 13146 / CH001A).